A 312-amino-acid chain; its full sequence is Malate dehydrogenase (312 aa).

NAD(+) contacts are provided by residues 7–13 (GAAGGIG) and Asp-34. Substrate contacts are provided by Arg-81 and Arg-87. NAD(+) is bound by residues Asn-94 and 117 to 119 (ITN). Residues Asn-119 and Arg-153 each coordinate substrate. The active-site Proton acceptor is His-177. Met-227 lines the NAD(+) pocket.

It belongs to the LDH/MDH superfamily. MDH type 1 family. As to quaternary structure, homodimer.

It carries out the reaction (S)-malate + NAD(+) = oxaloacetate + NADH + H(+). Its function is as follows. Catalyzes the reversible oxidation of malate to oxaloacetate. The protein is Malate dehydrogenase of Shigella flexneri serotype 5b (strain 8401).